Here is a 300-residue protein sequence, read N- to C-terminus: uncharacterized protein (300 aa).

It belongs to the histone deacetylase family.

Putative deacetylase. This is an uncharacterized protein from Picosynechococcus sp. (strain ATCC 27264 / PCC 7002 / PR-6) (Agmenellum quadruplicatum).